A 672-amino-acid polypeptide reads, in one-letter code: Hydrogenase-4 component B (672 aa).

Residues 1-5 (MDALQ) are Periplasmic-facing. Residues 6–26 (LLTWSLILYLFASLASLFLLG) traverse the membrane as a helical segment. Topologically, residues 27–30 (LDRL) are cytoplasmic. The helical transmembrane segment at 31–51 (AIKLSGITSLVGGVIGIISGI) threads the bilayer. At 52–79 (TQLHAGVTLVARFAPPFEFADLTLRMDS) the chain is on the periplasmic side. The helical transmembrane segment at 80–100 (LSAFMVLVISLLVVVCSLYSL) threads the bilayer. Over 101 to 119 (TYMREYEGKGAAAMGFFMN) the chain is Cytoplasmic. Residues 120 to 140 (IFIASMVALLVMDNAFWFIVL) form a helical membrane-spanning segment. Topologically, residues 141–164 (FEMMSLSSWFLVIARQDKTSINAG) are periplasmic. The chain crosses the membrane as a helical span at residues 165-185 (MLYFFIAHAGSVLIMIAFLLM). Over 186–199 (GRESGSLDFASFRT) the chain is Cytoplasmic. The chain crosses the membrane as a helical span at residues 200–220 (LSLSPGLASAVFLLAFFGFGA). The Periplasmic segment spans residues 221-242 (KAGMMPLHSWLPRAHPAAPSHA). The helical transmembrane segment at 243 to 263 (SALMSGVMVKIGIFGILKVAM) threads the bilayer. Over 264 to 272 (DLLAQTGLP) the chain is Cytoplasmic. Residues 273–293 (LWWGILVMAIGAISALLGVLY) form a helical membrane-spanning segment. The Periplasmic portion of the chain corresponds to 294 to 311 (ALAEQDIKRLLAWSTVEN). The chain crosses the membrane as a helical span at residues 312–332 (VGIILLAVGVAMVGLSLHDPL). Over 333-342 (LTVVGLLGAL) the chain is Cytoplasmic. A helical membrane pass occupies residues 343–363 (FHLLNHALFKGLLFLGAGAII). Residues 364-384 (SRLHTHDMEKMGALAKRMPWT) lie on the Periplasmic side of the membrane. The helical transmembrane segment at 385 to 405 (AAACLIGCLAISAIPPLNGFI) threads the bilayer. Residues 406 to 427 (SEWYTWQSLFSLSRVEAVALQL) lie on the Cytoplasmic side of the membrane. Residues 428–448 (AGPIAMVMLAVTGGLAVMCFV) form a helical membrane-spanning segment. At 449 to 474 (KMYGITFCGAPRSTHAEEAQEVPNTM) the chain is on the periplasmic side. Residues 475–495 (IVAMLLLAALCVLIALSASWL) form a helical membrane-spanning segment. The Cytoplasmic segment spans residues 496–504 (APKIMHIAH). A helical membrane pass occupies residues 505 to 525 (AFTNTPPATVASGIALVPGTF). Residues 526–531 (HTQVTP) are Periplasmic-facing. The helical transmembrane segment at 532 to 552 (SLLLLLLLAMPLLPGLYWLWC) threads the bilayer. Over 553–651 (RSRRAAFRRT…KEIQHLQSGD (99 aa)) the chain is Cytoplasmic. A helical membrane pass occupies residues 652–672 (FRLYCLYVVAALVVLLIAIAV).

This sequence belongs to the complex I subunit 5 family.

It is found in the cell inner membrane. Possible component of hydrogenase 4. This Escherichia coli (strain K12) protein is Hydrogenase-4 component B.